A 318-amino-acid chain; its full sequence is Putative HTH-type transcriptional regulatory protein TK0539 (318 aa).

The HTH cro/C1-type domain maps to 131–189 (LRELREKHGYSVNELAQLLGVSRKSLLNYERGEQAVSLDVAIQLEEIFDEALAEPIDIL). Residues 142–161 (VNELAQLLGVSRKSLLNYER) constitute a DNA-binding region (H-T-H motif).

This is Putative HTH-type transcriptional regulatory protein TK0539 from Thermococcus kodakarensis (strain ATCC BAA-918 / JCM 12380 / KOD1) (Pyrococcus kodakaraensis (strain KOD1)).